A 147-amino-acid polypeptide reads, in one-letter code: Hemoglobin subunit epsilon (147 aa).

Positions 3–147 (HFTAEEKAAI…VAIALGHKYH (145 aa)) constitute a Globin domain. 2 positions are modified to phosphoserine: Ser-14 and Ser-51. Residues His-64 and His-93 each coordinate heme b.

Belongs to the globin family. In terms of assembly, heterotetramer of two alpha chains and two epsilon chains in early embryonic hemoglobin Gower-2; two zeta chains and two epsilon chains in early embryonic hemoglobin Gower-1. In terms of tissue distribution, red blood cells.

The epsilon chain is a beta-type chain of early mammalian embryonic hemoglobin. This chain is Hemoglobin subunit epsilon (HBE1), found in Lagothrix lagotricha (Brown woolly monkey).